The following is a 318-amino-acid chain: Pyrimidine-specific ribonucleoside hydrolase RihA (318 aa).

H240 is an active-site residue.

The protein belongs to the IUNH family. RihA subfamily.

Functionally, hydrolyzes cytidine or uridine to ribose and cytosine or uracil, respectively. The polypeptide is Pyrimidine-specific ribonucleoside hydrolase RihA (Shewanella sp. (strain MR-7)).